A 349-amino-acid chain; its full sequence is Phosphate acyltransferase (349 aa).

Belongs to the PlsX family. Homodimer. Probably interacts with PlsY.

Its subcellular location is the cytoplasm. It carries out the reaction a fatty acyl-[ACP] + phosphate = an acyl phosphate + holo-[ACP]. Its pathway is lipid metabolism; phospholipid metabolism. Functionally, catalyzes the reversible formation of acyl-phosphate (acyl-PO(4)) from acyl-[acyl-carrier-protein] (acyl-ACP). This enzyme utilizes acyl-ACP as fatty acyl donor, but not acyl-CoA. The protein is Phosphate acyltransferase of Akkermansia muciniphila (strain ATCC BAA-835 / DSM 22959 / JCM 33894 / BCRC 81048 / CCUG 64013 / CIP 107961 / Muc).